We begin with the raw amino-acid sequence, 350 residues long: GTPase Obg (350 aa).

Residues 1 to 159 (MKLVDEAEIE…RTLKLELKLL (159 aa)) form the Obg domain. The disordered stretch occupies residues 126 to 147 (GNMHFKSSTNRSPRQALPGEPG). The OBG-type G domain occupies 160–337 (ADVGLLGFPN…IMSRIMAFFD (178 aa)). GTP-binding positions include 166–173 (GFPNAGKS), 191–195 (FTTLY), 213–216 (DIPG), 287–290 (NKAD), and 318–320 (SAL). Mg(2+) is bound by residues Ser-173 and Thr-193.

The protein belongs to the TRAFAC class OBG-HflX-like GTPase superfamily. OBG GTPase family. As to quaternary structure, monomer. The cofactor is Mg(2+).

It is found in the cytoplasm. An essential GTPase which binds GTP, GDP and possibly (p)ppGpp with moderate affinity, with high nucleotide exchange rates and a fairly low GTP hydrolysis rate. Plays a role in control of the cell cycle, stress response, ribosome biogenesis and in those bacteria that undergo differentiation, in morphogenesis control. This is GTPase Obg from Stenotrophomonas maltophilia (strain K279a).